We begin with the raw amino-acid sequence, 756 residues long: 1-phosphatidylinositol 4,5-bisphosphate phosphodiesterase delta-1 (756 aa).

Positions alanine 21–histidine 130 constitute a PH domain. The substrate binding stretch occupies residues lysine 30–lysine 57. EF-hand domains lie at lysine 140–glutamine 175 and valine 176–arginine 211. 10 residues coordinate Ca(2+): aspartate 153, asparagine 155, aspartate 157, lysine 159, glutamate 164, aspartate 189, serine 191, threonine 193, serine 195, and glutamate 200. The O-linked (GlcNAc) serine glycan is linked to serine 191. O-linked (GlcNAc) threonine glycosylation is present at threonine 193. The 145-residue stretch at glutamine 296–lysine 440 folds into the PI-PLC X-box domain. Histidine 311 is an active-site residue. Positions 312, 341, and 343 each coordinate Ca(2+). Histidine 356 is a catalytic residue. Residue glutamate 390 coordinates Ca(2+). The substrate site is built by lysine 438 and lysine 440. Threonine 457 bears the Phosphothreonine mark. At serine 460 the chain carries Phosphoserine. Residues leucine 492 to arginine 609 form the PI-PLC Y-box domain. Residues serine 522 and arginine 549 each coordinate substrate. The C2 domain occupies arginine 609–serine 737. Ca(2+) is bound by residues isoleucine 651, aspartate 653, asparagine 677, aspartate 706, tyrosine 707, and aspartate 708.

As to quaternary structure, interacts with TGM2. Requires Ca(2+) as cofactor.

The enzyme catalyses a 1,2-diacyl-sn-glycero-3-phospho-(1D-myo-inositol-4,5-bisphosphate) + H2O = 1D-myo-inositol 1,4,5-trisphosphate + a 1,2-diacyl-sn-glycerol + H(+). It carries out the reaction a 1,2-diacyl-sn-glycero-3-phospho-(1D-myo-inositol) + H2O = 1D-myo-inositol 1-phosphate + a 1,2-diacyl-sn-glycerol + H(+). In terms of biological role, the production of the second messenger molecules diacylglycerol (DAG) and inositol 1,4,5-trisphosphate (IP3) is mediated by activated phosphatidylinositol-specific phospholipase C enzymes. Essential for trophoblast and placental development. Binds phosphatidylinositol 4,5-bisphosphate. This is 1-phosphatidylinositol 4,5-bisphosphate phosphodiesterase delta-1 from Rattus norvegicus (Rat).